The chain runs to 248 residues: Trypsin II-P29 (248 aa).

The first 16 residues, 1 to 16 (MKFLFLILSCLGAAVA), serve as a signal peptide directing secretion. Residues 17–25 (FPGGADDDK) constitute a propeptide, activation peptide. The Peptidase S1 domain occupies 26–246 (IVGGYTCPEH…YVDWIQETIA (221 aa)). Cystine bridges form between Cys32-Cys162, Cys50-Cys66, Cys134-Cys235, Cys141-Cys208, Cys173-Cys187, and Cys198-Cys222. The active-site Charge relay system is the His65. The Ca(2+) site is built by Glu77, Asn79, Val82, and Glu87. Asp109 functions as the Charge relay system in the catalytic mechanism. Ser202 functions as the Charge relay system in the catalytic mechanism.

The protein belongs to the peptidase S1 family. The cofactor is Ca(2+). In terms of tissue distribution, high levels are seen in the pancreas while lower levels are found in the liver, spleen and thymus.

Its subcellular location is the secreted. The protein localises to the extracellular space. It catalyses the reaction Preferential cleavage: Arg-|-Xaa, Lys-|-Xaa.. In Gallus gallus (Chicken), this protein is Trypsin II-P29.